A 286-amino-acid polypeptide reads, in one-letter code: MTTNLPFSSPSKQLNRFSFWQSISIPWVVTIIYLLLILVLPIAALLVKSASLGLEGFWQIATTPIAISTYNVTFITALAAGLVNGVMGTLVAWVLVRCQFPGKKIVDAMVDLPFALPTSVAGLVLATLYSQTGWVGRFFAPFGIQIAFSRLGVFVAMVFISLPFIVRTLQPVLQELEEEAEEAAWSLGATEFQTFWRVIFPPLIPPILTGIALGFSRAVGEYGSVVLIASNIPFKDLIAPVLVFERLEQYDYPAATVIGAVLLSVSLILLLIINLLQQWGRRYAND.

The next 7 membrane-spanning stretches (helical) occupy residues 27-47 (WVVT…ALLV), 74-94 (FITA…VAWV), 108-128 (AMVD…LATL), 146-166 (IAFS…PFIV), 195-215 (FWRV…ALGF), 224-244 (SVVL…VLVF), and 257-276 (VIGA…INLL). The region spanning 70 to 273 (YNVTFITALA…SVSLILLLII (204 aa)) is the ABC transmembrane type-1 domain.

It belongs to the binding-protein-dependent transport system permease family. CysTW subfamily. In terms of assembly, the complex is composed of two ATP-binding proteins (CysA), two transmembrane proteins (CysT and CysW) and a solute-binding protein (CysP).

Its subcellular location is the cell inner membrane. In terms of biological role, part of the ABC transporter complex CysAWTP (TC 3.A.1.6.1) involved in sulfate/thiosulfate import. Probably responsible for the translocation of the substrate across the membrane. The sequence is that of Sulfate transport system permease protein CysT (cysT) from Synechocystis sp. (strain ATCC 27184 / PCC 6803 / Kazusa).